A 273-amino-acid chain; its full sequence is Large ribosomal subunit protein uL2 (273 aa).

Positions 228-273 are disordered; that stretch reads VDHPHGGGEGKTSGGRHPVTPWGFPTKGKKTRKNKRTSKFIVKKRK. The segment covering 254–273 has biased composition (basic residues); it reads KGKKTRKNKRTSKFIVKKRK.

This sequence belongs to the universal ribosomal protein uL2 family. Part of the 50S ribosomal subunit. Forms a bridge to the 30S subunit in the 70S ribosome.

In terms of biological role, one of the primary rRNA binding proteins. Required for association of the 30S and 50S subunits to form the 70S ribosome, for tRNA binding and peptide bond formation. It has been suggested to have peptidyltransferase activity; this is somewhat controversial. Makes several contacts with the 16S rRNA in the 70S ribosome. The sequence is that of Large ribosomal subunit protein uL2 from Rickettsia africae (strain ESF-5).